Reading from the N-terminus, the 272-residue chain is Shikimate dehydrogenase (NADP(+)) (272 aa).

Shikimate is bound by residues 14 to 16 (SKS) and T61. The active-site Proton acceptor is the K65. Residue E77 coordinates NADP(+). 2 residues coordinate shikimate: N86 and D102. NADP(+) contacts are provided by residues 126–130 (GAGGA), 149–154 (NRTFSR), and M213. Position 215 (Y215) interacts with shikimate. An NADP(+)-binding site is contributed by G237.

This sequence belongs to the shikimate dehydrogenase family. Homodimer.

It carries out the reaction shikimate + NADP(+) = 3-dehydroshikimate + NADPH + H(+). It functions in the pathway metabolic intermediate biosynthesis; chorismate biosynthesis; chorismate from D-erythrose 4-phosphate and phosphoenolpyruvate: step 4/7. In terms of biological role, involved in the biosynthesis of the chorismate, which leads to the biosynthesis of aromatic amino acids. Catalyzes the reversible NADPH linked reduction of 3-dehydroshikimate (DHSA) to yield shikimate (SA). This Photorhabdus laumondii subsp. laumondii (strain DSM 15139 / CIP 105565 / TT01) (Photorhabdus luminescens subsp. laumondii) protein is Shikimate dehydrogenase (NADP(+)).